A 98-amino-acid polypeptide reads, in one-letter code: NADH-ubiquinone oxidoreductase chain 4L (98 aa).

3 helical membrane passes run 1–21 (MSIV…GMLI), 29–49 (SLLC…LIIL), and 61–81 (IILL…LVMV).

The protein belongs to the complex I subunit 4L family. In terms of assembly, core subunit of respiratory chain NADH dehydrogenase (Complex I) which is composed of 45 different subunits.

Its subcellular location is the mitochondrion inner membrane. It catalyses the reaction a ubiquinone + NADH + 5 H(+)(in) = a ubiquinol + NAD(+) + 4 H(+)(out). Functionally, core subunit of the mitochondrial membrane respiratory chain NADH dehydrogenase (Complex I) which catalyzes electron transfer from NADH through the respiratory chain, using ubiquinone as an electron acceptor. Part of the enzyme membrane arm which is embedded in the lipid bilayer and involved in proton translocation. The chain is NADH-ubiquinone oxidoreductase chain 4L (MT-ND4L) from Herpestes javanicus (Small Indian mongoose).